Consider the following 271-residue polypeptide: Tryptophan synthase alpha chain (271 aa).

Residues glutamate 49 and aspartate 60 each act as proton acceptor in the active site.

It belongs to the TrpA family. As to quaternary structure, tetramer of two alpha and two beta chains.

It carries out the reaction (1S,2R)-1-C-(indol-3-yl)glycerol 3-phosphate + L-serine = D-glyceraldehyde 3-phosphate + L-tryptophan + H2O. It participates in amino-acid biosynthesis; L-tryptophan biosynthesis; L-tryptophan from chorismate: step 5/5. Functionally, the alpha subunit is responsible for the aldol cleavage of indoleglycerol phosphate to indole and glyceraldehyde 3-phosphate. The chain is Tryptophan synthase alpha chain from Burkholderia pseudomallei (strain 1106a).